The following is a 330-amino-acid chain: Pseudouridine-5'-phosphate glycosidase (330 aa).

Glu-50 acts as the Proton donor in catalysis. Substrate contacts are provided by Lys-112 and Val-132. Asp-164 contributes to the Mn(2+) binding site. 166 to 168 (SSD) contacts substrate. Residue Lys-185 is the Nucleophile of the active site.

Belongs to the pseudouridine-5'-phosphate glycosidase family. As to quaternary structure, homotrimer. Mn(2+) serves as cofactor.

The protein resides in the peroxisome. The catalysed reaction is D-ribose 5-phosphate + uracil = psi-UMP + H2O. Its function is as follows. Catalyzes the reversible cleavage of pseudouridine 5'-phosphate (PsiMP) to ribose 5-phosphate and uracil. Functions biologically in the cleavage direction, as part of a pseudouridine degradation pathway. Acts together with the pseudouridine kinase PUKI in the peroxisome to prevent toxic pseudouridine monophosphate accumulation. Can catalyze the formation of pseudouridine 5'-phosphate (reverse reaction) in vitro, with a catalytic efficiency 4 times lower than the hydrolysis reaction. The polypeptide is Pseudouridine-5'-phosphate glycosidase (Arabidopsis thaliana (Mouse-ear cress)).